Here is a 158-residue protein sequence, read N- to C-terminus: Cathelicidin-6 (158 aa).

The N-terminal stretch at 1-29 (METQRASLSLGRWSLWLLLLGLALPSASA) is a signal peptide. The propeptide occupies 30–131 (QALSYREAVL…NVTCEELQSV (102 aa)). Intrachain disulfides connect Cys-86–Cys-97 and Cys-108–Cys-125.

This sequence belongs to the cathelicidin family.

It is found in the secreted. Exerts a potent antimicrobial activity against Gram-negative and Gram-positive bacteria, including methicillin-resistant Staphylococcus aureus, and fungi. This is Cathelicidin-6 (CATHL6) from Bos taurus (Bovine).